A 1098-amino-acid polypeptide reads, in one-letter code: Protein diaphanous homolog 2 (1098 aa).

Met-1 carries the N-acetylmethionine modification. The interval 1–62 (MEELGAAASG…SFRKSATKRE (62 aa)) is disordered. Positions 36 to 52 (ANEEETRNKPKLRDRIT) are enriched in basic and acidic residues. Residues 90–463 (SLILSEKEVL…QIVLHCSGMD (374 aa)) form the GBD/FH3 domain. 2 coiled-coil regions span residues 375-416 (QLRV…NMLK) and 490-539 (EENE…GQGV). Disordered regions lie at residues 537–565 (QGVPSAIPGPPPPPPLPGAGPCPPPPPPP), 578–611 (PPPPLPGMPGIPPPPPPPLSGVPPPPPPPGGVFP), 679–699 (MKGQRNTEAAEENRSGPPKKK), 1007–1047 (HKRK…NKEG), and 1063–1098 (GAAFRDRRKRIPRNPDNRRPPLERSRSRHNGAMSSK). Pro residues-rich tracts occupy residues 543–565 (IPGPPPPPPLPGAGPCPPPPPPP) and 578–608 (PPPPLPGMPGIPPPPPPPLSGVPPPPPPPGG). In terms of domain architecture, FH1 spans 544–620 (PGPPPPPPLP…PLLSGPIELP (77 aa)). An FH2 domain is found at 625 to 1025 (QKKLYKPDIP…SRRAKLAKEK (401 aa)). Residues 999-1050 (FLEALKENHKRKEMEEKSRRAKLAKEKAEQEKLERQKKKKQLIDINKEGDET) adopt a coiled-coil conformation. Composition is skewed to basic and acidic residues over residues 1007–1032 (HKRKEMEEKSRRAKLAKEKAEQEKLE) and 1075–1087 (RNPDNRRPPLERS). Residues 1048–1078 (DETGVMDNLLEALQSGAAFRDRRKRIPRNPD) form the DAD domain.

This sequence belongs to the formin homology family. Diaphanous subfamily. As to quaternary structure, interacts with MAPRE1 and APC.

In terms of biological role, may be involved in oogenesis. The polypeptide is Protein diaphanous homolog 2 (Diaph2) (Mus musculus (Mouse)).